The primary structure comprises 218 residues: Adenylate kinase (218 aa).

Residue 10–15 (GAGKGT) participates in ATP binding. Positions 30–59 (STGDMFRAAMADQTDLGVKAKAFIDKGELV) are NMP. AMP is bound by residues Thr31, Arg36, 57–59 (ELV), 85–88 (GFPR), and Gln92. The segment at 126–164 (GRFICKTCGATYHKLYHPTQVEGTCDRCGGHVFFQREDD) is LID. Position 127 (Arg127) interacts with ATP. Cys130 and Cys133 together coordinate Zn(2+). 136-137 (TY) lines the ATP pocket. Zn(2+) contacts are provided by Cys150 and Cys153. 2 residues coordinate AMP: Arg161 and Arg172. Gln200 contacts ATP.

Belongs to the adenylate kinase family. In terms of assembly, monomer.

The protein resides in the cytoplasm. The enzyme catalyses AMP + ATP = 2 ADP. Its pathway is purine metabolism; AMP biosynthesis via salvage pathway; AMP from ADP: step 1/1. Catalyzes the reversible transfer of the terminal phosphate group between ATP and AMP. Plays an important role in cellular energy homeostasis and in adenine nucleotide metabolism. In Latilactobacillus sakei subsp. sakei (strain 23K) (Lactobacillus sakei subsp. sakei), this protein is Adenylate kinase.